Reading from the N-terminus, the 143-residue chain is MSLFELLEPTIAGMGYELVDIEQSAPGRLLRVFVDKKDGAITLADCVAVSNHLGQLLAVENIDYNRLEVSSPGLDRPLKKRADFVRFVGESIRIRLRIALQGQRNFVGTLTEVGDDALMLNVDGKLLQFELKNLEKARLIPKL.

The protein belongs to the RimP family.

The protein resides in the cytoplasm. In terms of biological role, required for maturation of 30S ribosomal subunits. This chain is Ribosome maturation factor RimP, found in Nitrosomonas eutropha (strain DSM 101675 / C91 / Nm57).